Consider the following 245-residue polypeptide: 1-(5-phosphoribosyl)-5-[(5-phosphoribosylamino)methylideneamino] imidazole-4-carboxamide isomerase (245 aa).

Catalysis depends on D8, which acts as the Proton acceptor. D129 (proton donor) is an active-site residue.

It belongs to the HisA/HisF family.

The protein localises to the cytoplasm. It carries out the reaction 1-(5-phospho-beta-D-ribosyl)-5-[(5-phospho-beta-D-ribosylamino)methylideneamino]imidazole-4-carboxamide = 5-[(5-phospho-1-deoxy-D-ribulos-1-ylimino)methylamino]-1-(5-phospho-beta-D-ribosyl)imidazole-4-carboxamide. It functions in the pathway amino-acid biosynthesis; L-histidine biosynthesis; L-histidine from 5-phospho-alpha-D-ribose 1-diphosphate: step 4/9. In Sinorhizobium fredii (strain NBRC 101917 / NGR234), this protein is 1-(5-phosphoribosyl)-5-[(5-phosphoribosylamino)methylideneamino] imidazole-4-carboxamide isomerase.